We begin with the raw amino-acid sequence, 429 residues long: Fez family zinc finger protein 1 (429 aa).

The Engrailed homology 1 repressor signature appears at 29 to 44 (PLAFSIERIMARTPEP). 6 consecutive C2H2-type zinc fingers follow at residues 247-269 (FTCEVCGKVFNAHYNLTRHMPVH), 275-297 (FVCKVCGKGFRQASTLCRHKIIH), 303-325 (HKCNQCGKAFNRSSTLNTHTRIH), 331-353 (FICEFCGKGFHQKGNYKNHKLTH), 359-381 (FKCNICNKAFHQVYNLTFHMHTH), and 387-410 (FTCPTCGKGFCRNFDLKKHIRKLH). The disordered stretch occupies residues 409-429 (LHDISPGPHSPPTPTGNTEGQ).

Belongs to the krueppel C2H2-type zinc-finger protein family.

The protein localises to the nucleus. Transcription repressor. Involved in the development of the forebrain region. This chain is Fez family zinc finger protein 1 (fezf1), found in Danio rerio (Zebrafish).